We begin with the raw amino-acid sequence, 445 residues long: DDB1- and CUL4-associated factor 13 (445 aa).

An N6-acetyllysine modification is found at Lys-49. WD repeat units lie at residues 64–104, 107–146, 149–191, 194–234, 236–276, 280–319, and 323–362; these read GHRD…CIRT, AHEGFVRGICTRFCGTSFFTVGDDKTVKQWKMDGPGYGDE, PLHT…PICS, WGFD…PLKK, ILDM…TPVM, DHVSAVLDVDYSPTGKEFVSASFDKSIRIFPVDKSRSREV, and KRMQHVICVKWTSDSKYIMCGSDEMNIRLWKANASEKLGV. A required for nucleolar location region spans residues 353-441; the sequence is KANASEKLGV…LVSEKKKHVV (89 aa).

It belongs to the WD repeat DCAF13/WDSOF1 family. As to quaternary structure, part of the small subunit (SSU) processome, composed of more than 70 proteins and the RNA chaperone small nucleolar RNA (snoRNA) U3. Component of the DCX(DCAF13) E3 ubiquitin ligase complex, at least composed of CUL4 (CUL4A or CUL4B), DDB1, DCAF13 and RBX1. Interacts (via WD40 domain) with DDB1. Interacts with ESR1 and LATS1. Expressed in the endometrium during decidualization. Expression is down-regulated in preeclampsia decidual tissues.

It is found in the nucleus. The protein resides in the nucleolus. It functions in the pathway protein modification; protein ubiquitination. Part of the small subunit (SSU) processome, first precursor of the small eukaryotic ribosomal subunit. During the assembly of the SSU processome in the nucleolus, many ribosome biogenesis factors, an RNA chaperone and ribosomal proteins associate with the nascent pre-rRNA and work in concert to generate RNA folding, modifications, rearrangements and cleavage as well as targeted degradation of pre-ribosomal RNA by the RNA exosome. Participates in the 18S rRNA processing in growing oocytes, being essential for oocyte nonsurrounded nucleolus (NSN) to surrounded nucleolus (SN) transition. Its function is as follows. Substrate-recognition component of a DCX (DDB1-CUL4-X-box) E3 ubiquitin-protein ligase complex that plays a key role in embryo preimplantation and is required for normal meiotic cycle progression in oocytes. Acts as a maternal factor that regulates oocyte and zygotic chromatin tightness during maternal to zygotic transition. Also involved in the transformation of the endometrium into the decidua, known as decidualization, providing a solid foundation for implantation of blastocysts. Recognizes the histone methyltransferases SUV39H1 and SUV39H2 and directs them to polyubiquitination and proteasomal degradation, which facilitates the H3K9me3 removal and early zygotic gene expression, essential steps for progressive genome reprogramming and the establishment of pluripotency during preimplantation embryonic development. Supports the spindle assembly and chromosome condensation during oocyte meiotic division by targeting the polyubiquitination and degradation of PTEN, a lipid phosphatase that inhibits PI3K pathway as well as oocyte growth and maturation. Targets PMP22 for polyubiquitination and proteasomal degradation. This chain is DDB1- and CUL4-associated factor 13, found in Homo sapiens (Human).